The chain runs to 403 residues: Adenylate cyclase (403 aa).

Over residues 1–16 the composition is skewed to polar residues; it reads MSTEHTNTPRADSPQS. The interval 1 to 37 is disordered; that stretch reads MSTEHTNTPRADSPQSAAEAVRGARQHAPAATPAESD. The pyruvate binding stretch occupies residues 31 to 60; the sequence is ATPAESDPILELAEAMEGPLRIPAHTPEAV. The Guanylate cyclase domain maps to 238-347; it reads AVGFADLVSY…PTVNMAARLT (110 aa). Residues aspartate 243 and aspartate 287 each coordinate Mg(2+).

Belongs to the adenylyl cyclase class-3 family. Homodimer. Mg(2+) is required as a cofactor.

It localises to the cytoplasm. It catalyses the reaction ATP = 3',5'-cyclic AMP + diphosphate. Its activity is regulated as follows. Pyruvate-stimulated. In terms of biological role, plays essential roles in regulation of cellular metabolism by catalyzing the synthesis of a second messenger, cAMP. This is Adenylate cyclase (cya) from Glutamicibacter nicotianae (Arthrobacter nicotianae).